The following is a 462-amino-acid chain: MGQQQSKGELLYQQVSYGNSEGIRALHRDGGDLEWMDREGKTPLILACMNSELFDVAKTLIELGSNVNAYRPGRHAGTPLHHAAKRGLENTVKLLLSHGANPLVLNDDCQTPLEVARVKGFSNVVRAIEKHICLFSGWMREFYGPTFLDLFAPQLLSRRVWVVIVPTGSRNPTKPFKLELVVYASLQDAQPRTVMPLWKANLEEPKAKQSDTSVMIVDNSTIPSRRMKKRRVCASHGRRRPQVVRQTRLKFAPSTEGDSQQLKWFCDACKGIPQPMHPPVFLQAPPSAPPPPSEDGLAMGMNASLHTTMSDPSNLNHHSIGQASSSSGPSSSTAPPSGKASAFGFNSHGIGIVLESSPSAPPLTDDDIATVDDGPIHYPSIDSTPVDLPSAASLPASTEGERKEDGNTGTCAICLDAPSEAVCVPCGHVAGCMSCLKEIKSKNWGCPVCRAKIDQVIKLYRV.

3 ANK repeats span residues 6-35, 39-69, and 75-104; these read SKGELLYQQVSYGNSEGIRALHRDGGDLEW, EGKTPLILACMNSELFDVAKTLIELGSNVNA, and HAGTPLHHAAKRGLENTVKLLLSHGANPLV. 2 disordered regions span residues 277 to 341 and 356 to 402; these read HPPV…GKAS and SSPS…EGER. Residues 304–317 are compositionally biased toward polar residues; it reads SLHTTMSDPSNLNH. The span at 319 to 341 shows a compositional bias: low complexity; the sequence is SIGQASSSSGPSSSTAPPSGKAS. Residues 411–450 form an RING-type zinc finger; sequence CAICLDAPSEAVCVPCGHVAGCMSCLKEIKSKNWGCPVCR.

It catalyses the reaction S-ubiquitinyl-[E2 ubiquitin-conjugating enzyme]-L-cysteine + [acceptor protein]-L-lysine = [E2 ubiquitin-conjugating enzyme]-L-cysteine + N(6)-ubiquitinyl-[acceptor protein]-L-lysine.. The protein operates within protein modification; protein ubiquitination. No E3 ubiquitin-protein ligase activity observed when associated with the E2 enzyme UBC8 in vitro. The protein is Putative E3 ubiquitin-protein ligase XBAT35 (XBAT35) of Arabidopsis thaliana (Mouse-ear cress).